We begin with the raw amino-acid sequence, 536 residues long: Fanconi anemia group E protein (536 aa).

Positions 150 to 371 (MEGASPLSER…VLTRSLFLGR (222 aa)) are interaction with FANCC. The disordered stretch occupies residues 171–252 (LGLGGRRLKS…ADGGSASPIK (82 aa)). Residues 230–239 (EKERPEHKSL) are compositionally biased toward basic and acidic residues. Residue Ser-249 is modified to Phosphoserine. Residue Thr-346 is modified to Phosphothreonine; by CHEK1. Ser-374 carries the post-translational modification Phosphoserine; by CHEK1.

In terms of assembly, belongs to the multisubunit FA complex composed of FANCA, FANCB, FANCC, FANCE, FANCF, FANCG, FANCL/PHF9 and FANCM. The complex is not found in FA patients. Interacts with FANCC and FANCD2. Phosphorylated. Phosphorylation by CHEK1 at Thr-346 and Ser-374 regulates its function in DNA cross-links repair. In terms of processing, ubiquitinated. Phosphorylation by CHEK1 induces polyubiquitination and degradation.

It is found in the nucleus. As part of the Fanconi anemia (FA) complex functions in DNA cross-links repair. Required for the nuclear accumulation of FANCC and provides a critical bridge between the FA complex and FANCD2. This Homo sapiens (Human) protein is Fanconi anemia group E protein (FANCE).